A 349-amino-acid chain; its full sequence is Flagellar P-ring protein (349 aa).

Positions 1-20 are cleaved as a signal peptide; it reads MSKAIKILLPLLLFSLSLQA.

Belongs to the FlgI family. In terms of assembly, the basal body constitutes a major portion of the flagellar organelle and consists of four rings (L,P,S, and M) mounted on a central rod.

The protein localises to the periplasm. It is found in the bacterial flagellum basal body. Functionally, assembles around the rod to form the L-ring and probably protects the motor/basal body from shearing forces during rotation. The sequence is that of Flagellar P-ring protein from Wolinella succinogenes (strain ATCC 29543 / DSM 1740 / CCUG 13145 / JCM 31913 / LMG 7466 / NCTC 11488 / FDC 602W) (Vibrio succinogenes).